A 190-amino-acid chain; its full sequence is Ribosome hibernation promotion factor (190 aa).

Belongs to the HPF/YfiA ribosome-associated protein family. Long HPF subfamily. Interacts with 100S ribosomes.

It localises to the cytoplasm. Functionally, required for dimerization of active 70S ribosomes into 100S ribosomes in stationary phase; 100S ribosomes are translationally inactive and sometimes present during exponential growth. The protein is Ribosome hibernation promotion factor of Staphylococcus saprophyticus subsp. saprophyticus (strain ATCC 15305 / DSM 20229 / NCIMB 8711 / NCTC 7292 / S-41).